The sequence spans 130 residues: Transcription antitermination protein NusB (130 aa).

This sequence belongs to the NusB family.

Its function is as follows. Involved in transcription antitermination. Required for transcription of ribosomal RNA (rRNA) genes. Binds specifically to the boxA antiterminator sequence of the ribosomal RNA (rrn) operons. The polypeptide is Transcription antitermination protein NusB (Bacillus mycoides (strain KBAB4) (Bacillus weihenstephanensis)).